A 304-amino-acid chain; its full sequence is MLNQLQRDILRLKKEKNAIILAHNYQSREIQEIADFKGDSLELCIEASRIEGKDIVVFCGVDFMAETAYILNPDKKILIPDRGAECPMAHMLSAEDVRMARKRYPDAAVVLYVNTLAEAKAEADILCTSANAVRVVESLDEDLVLFGPDRNLAWYVQEHTDKTIIPIPEEGHCYVHKMFTAGDVMAAKEKYPEAELLIHPECDPEVQELADHILSTGGMLRRVLESDAESFIIGTEVDMTTRISLESDKKTIPLLEEAICENMKLHTLEKVKNSLINEEFVVTVPDEIARRARRAVERMIRVSE.

The iminosuccinate site is built by His-23 and Ser-40. Cys-86 contributes to the [4Fe-4S] cluster binding site. Iminosuccinate-binding positions include 112–114 and Ser-129; that span reads YVN. Residue Cys-173 participates in [4Fe-4S] cluster binding. Residues 199–201 and Thr-216 each bind iminosuccinate; that span reads HPE. Cys-260 lines the [4Fe-4S] cluster pocket.

This sequence belongs to the quinolinate synthase family. Type 2 subfamily. [4Fe-4S] cluster is required as a cofactor.

It is found in the cytoplasm. The enzyme catalyses iminosuccinate + dihydroxyacetone phosphate = quinolinate + phosphate + 2 H2O + H(+). The protein operates within cofactor biosynthesis; NAD(+) biosynthesis; quinolinate from iminoaspartate: step 1/1. In terms of biological role, catalyzes the condensation of iminoaspartate with dihydroxyacetone phosphate to form quinolinate. This chain is Quinolinate synthase, found in Methanothermobacter thermautotrophicus (strain ATCC 29096 / DSM 1053 / JCM 10044 / NBRC 100330 / Delta H) (Methanobacterium thermoautotrophicum).